Consider the following 217-residue polypeptide: Ribosomal RNA small subunit methyltransferase G (217 aa).

S-adenosyl-L-methionine contacts are provided by residues Gly-78, Phe-83, 129–130 (AE), and Arg-146.

Belongs to the methyltransferase superfamily. RNA methyltransferase RsmG family.

It is found in the cytoplasm. It carries out the reaction guanosine(527) in 16S rRNA + S-adenosyl-L-methionine = N(7)-methylguanosine(527) in 16S rRNA + S-adenosyl-L-homocysteine. Its function is as follows. Specifically methylates the N7 position of guanine in position 527 of 16S rRNA. This Geobacter sp. (strain M21) protein is Ribosomal RNA small subunit methyltransferase G.